A 424-amino-acid chain; its full sequence is GTPase HflX (424 aa).

The 171-residue stretch at 194-364 (YTVALTGYTG…AVVEMLPEKV (171 aa)) folds into the Hflx-type G domain. GTP contacts are provided by residues 200–207 (GYTGAGKT), 225–229 (FATLS), 246–249 (DTIG), 314–317 (NKID), and 342–344 (SAA). Mg(2+) is bound by residues Thr-207 and Thr-227.

It belongs to the TRAFAC class OBG-HflX-like GTPase superfamily. HflX GTPase family. As to quaternary structure, monomer. Associates with the 50S ribosomal subunit. It depends on Mg(2+) as a cofactor.

It localises to the cytoplasm. In terms of biological role, GTPase that associates with the 50S ribosomal subunit and may have a role during protein synthesis or ribosome biogenesis. The polypeptide is GTPase HflX (Thermofilum pendens (strain DSM 2475 / Hrk 5)).